The sequence spans 759 residues: Cullin-4A (759 aa).

The interval 1–40 (MADEGPRKGSVSALMGRTNGLTKPAALAGGPAKPGGTGGS) is disordered. K8 participates in a covalent cross-link: Glycyl lysine isopeptide (Lys-Gly) (interchain with G-Cter in SUMO2). S10 bears the Phosphoserine mark. Low complexity predominate over residues 20–31 (GLTKPAALAGGP). K33 is covalently cross-linked (Glycyl lysine isopeptide (Lys-Gly) (interchain with G-Cter in ubiquitin)). Positions 691 to 750 (DRQYQIDAAIVRIMKMRKTLGHNLLVSELYNQLKFPVKPGDLKKRIESLIDRDYMERDKD) constitute a Cullin neddylation domain. A Glycyl lysine isopeptide (Lys-Gly) (interchain with G-Cter in NEDD8) cross-link involves residue K705.

Belongs to the cullin family. In terms of assembly, can self-associate. Component of multiple DCX (DDB1-CUL4-X-box) E3 ubiquitin-protein ligase complexes that seem to consist of DDB1, CUL4A or CUL4B, RBX1 and a variable substrate recognition component which seems to belong to a protein family described as DCAF (Ddb1- and Cul4-associated factor) or CDW (CUL4-DDB1-associated WD40-repeat) proteins. Component of the CSA complex (DCX(ERCC8) complex) containing ERCC8, RBX1, DDB1 and CUL4A; the CSA complex interacts with RNA polymerase II; upon UV irradiation it interacts with the COP9 signalosome and preferentially with the hyperphosphorylated form of RNA polymerase II. Component of the DCX(DET1-COP1) complex with the substrate recognition component DET1 and COP1. Component of the DCX(DDB2) complex with the substrate recognition component DDB2. Component of the DCX(DTL) complex with the putative substrate recognition component DTL. Component of DCX complexes part of the DesCEND (destruction via C-end degrons) pathway, which contain either TRPC4AP or DCAF12 as substrate-recognition component. Component of the DCX(AMBRA1) complex with the substrate recognition component AMBRA1. Interacts with DDB1, RBX1, RNF7, CDT1, TIP120A/CAND1, SKP2, CDKN1B, MDM2, TP53 and HOXA9. Interacts with DDB2; the interactions with DDB2 and CAND1 are mutually exclusive. Interacts with DCAF1, DTL, DDA1, DCAF6, DCAF4, DCAF16, DCAF17, DET1, WDTC1, DCAF5, DCAF11, WDR24A, COP1, PAFAH1B1, ERCC8, GRWD1, FBXW5, RBBP7, GNB2, WSB1, WSB2, NUP43, PWP1, FBXW8, ATG16L1, KATNB1, RBBP4, RBBP5, LRWD1 and DCAF8. May interact with WDR26, WDR51B, SNRNP40, WDR61, WDR76, WDR5. Interacts (when neddylated) with ARIH1; leading to activate the E3 ligase activity of ARIH1. The DDB1-CUL4A complex interacts with CRY1. Interacts (unneddylated form) with DCUN1D1, DCUN1D2, DCUN1D3, DCUN1D4 and DCUN1D5; these interactions promote the cullin neddylation. As to quaternary structure, (Microbial infection) Interacts with murine cytomegalovirus M48. Post-translationally, neddylated; required for activity of cullin-RING-based E3 ubiquitin-protein ligase complexes. Deneddylated via its interaction with the COP9 signalosome (CSN) complex. In terms of processing, (Microbial infection) Deneddylated by murine cytomegalovirus M48 leading to a S-phase-like environment that is required for efficient replication of the viral genome. As to expression, expressed in oocytes (at protein level). In the ovary, also expressed in cumulus cells. Expressed in testis, spleen and kidney.

It participates in protein modification; protein ubiquitination. Core component of multiple cullin-RING-based E3 ubiquitin-protein ligase complexes which mediate the ubiquitination of target proteins. As a scaffold protein may contribute to catalysis through positioning of the substrate and the ubiquitin-conjugating enzyme. The E3 ubiquitin-protein ligase activity of the complex is dependent on the neddylation of the cullin subunit and is inhibited by the association of the deneddylated cullin subunit with TIP120A/CAND1. The functional specificity of the E3 ubiquitin-protein ligase complex depends on the variable substrate recognition component. DCX(DET1-COP1) directs ubiquitination of JUN. DCX(DDB2) directs ubiquitination of XPC. DCX(DDB2) ubiquitinates histones H3-H4 and is required for efficient histone deposition during replication-coupled (H3.1) and replication-independent (H3.3) nucleosome assembly, probably by facilitating the transfer of H3 from ASF1A/ASF1B to other chaperones involved in histone deposition. DCX(DTL) plays a role in PCNA-dependent polyubiquitination of CDT1 and MDM2-dependent ubiquitination of p53/TP53 in response to radiation-induced DNA damage and during DNA replication. DCX(DTL) directs autoubiquitination of DTL. In association with DDB1 and SKP2 probably is involved in ubiquitination of CDKN1B/p27kip. Is involved in ubiquitination of HOXA9. The DDB1-CUL4A-DTL E3 ligase complex regulates the circadian clock function by mediating the ubiquitination and degradation of CRY1. The DCX(ERCC8) complex (also named CSA complex) plays a role in transcription-coupled repair (TCR). A number of DCX complexes (containing either TRPC4AP or DCAF12 as substrate-recognition component) are part of the DesCEND (destruction via C-end degrons) pathway, which recognizes a C-degron located at the extreme C terminus of target proteins, leading to their ubiquitination and degradation. With CUL4B, contributes to ribosome biogenesis. The DCX(AMBRA1) complex is a master regulator of the transition from G1 to S cell phase by mediating ubiquitination of phosphorylated cyclin-D (CCND1, CCND2 and CCND3). The DCX(AMBRA1) complex also acts as a regulator of Cul5-RING (CRL5) E3 ubiquitin-protein ligase complexes by mediating ubiquitination and degradation of Elongin-C (ELOC) component of CRL5 complexes. In Mus musculus (Mouse), this protein is Cullin-4A.